A 230-amino-acid chain; its full sequence is 2,3-bisphosphoglycerate-dependent phosphoglycerate mutase (230 aa).

Substrate is bound by residues 8–15, 21–22, Arg60, 87–90, Lys98, 114–115, and 183–184; these read RHGESEWN, TG, ERHY, RR, and GN. The active-site Tele-phosphohistidine intermediate is the His9. The active-site Proton donor/acceptor is Glu87.

Belongs to the phosphoglycerate mutase family. BPG-dependent PGAM subfamily.

The catalysed reaction is (2R)-2-phosphoglycerate = (2R)-3-phosphoglycerate. Its pathway is carbohydrate degradation; glycolysis; pyruvate from D-glyceraldehyde 3-phosphate: step 3/5. Catalyzes the interconversion of 2-phosphoglycerate and 3-phosphoglycerate. In Streptococcus pneumoniae (strain P1031), this protein is 2,3-bisphosphoglycerate-dependent phosphoglycerate mutase.